Consider the following 577-residue polypeptide: Moesin (577 aa).

An FERM domain is found at Pro2 to Arg295. Ser74 carries the post-translational modification Phosphoserine. The residue at position 79 (Lys79) is an N6-acetyllysine. N6-succinyllysine is present on Lys83. The [IL]-x-C-x-x-[DE] motif signature appears at Ile115–Glu120. Tyr116 bears the Phosphotyrosine mark. Cys117 bears the S-nitrosocysteine mark. 2 positions are modified to N6-acetyllysine: Lys139 and Lys165. Disordered regions lie at residues Leu322 to Arg342, Thr358 to Ser419, and Ser468 to Val518. Basic and acidic residues predominate over residues Thr358–Glu401. Ser407 carries the post-translational modification Phosphoserine. Residues Ala492–Val518 are compositionally biased toward basic and acidic residues. Ser527 is modified (phosphoserine). Thr558 bears the Phosphothreonine; by ROCK2 and STK10 mark.

In resting T-cells, part of a PAG1-NHERF1-MSN complex which is disrupted upon TCR activation. Interacts with NHERF1. Interacts with PPP1R16B. Interacts with SELPLG and SYK; these interactions mediate the activation of SYK by SELPLG. Interacts with PDPN (via cytoplasmic domain); this interaction activates RHOA and promotes epithelial-mesenchymal transition. Interacts with SPN/CD43 cytoplasmic tail. Interacts with CD44. Interacts with ICAM2. Interacts with ICAM3 (via C-terminus). Interacts with PDZD8. Interacts with F-actin. Interacts with CD46. Interacts with PTPN6. Phosphorylation on Thr-558 by STK10 negatively regulates lymphocyte migration and polarization. Phosphorylation on Thr-558 is crucial for the formation of microvilli-like structures. Phosphorylation by ROCK2 suppresses the head-to-tail association of the N-terminal and C-terminal halves resulting in an opened conformation which is capable of actin and membrane-binding. In terms of processing, S-nitrosylation of Cys-117 is induced by interferon-gamma and oxidatively-modified low-densitity lipoprotein (LDL(ox)) implicating the iNOS-S100A8/9 transnitrosylase complex.

The protein localises to the cell membrane. The protein resides in the cytoplasm. It is found in the cytoskeleton. It localises to the apical cell membrane. Its subcellular location is the cell projection. The protein localises to the microvillus membrane. The protein resides in the microvillus. Ezrin-radixin-moesin (ERM) family protein that connects the actin cytoskeleton to the plasma membrane and thereby regulates the structure and function of specific domains of the cell cortex. Tethers actin filaments by oscillating between a resting and an activated state providing transient interactions between moesin and the actin cytoskeleton. Once phosphorylated on its C-terminal threonine, moesin is activated leading to interaction with F-actin and cytoskeletal rearrangement. These rearrangements regulate many cellular processes, including cell shape determination, membrane transport, and signal transduction. The role of moesin is particularly important in immunity acting on both T and B-cells homeostasis and self-tolerance, regulating lymphocyte egress from lymphoid organs. Modulates phagolysosomal biogenesis in macrophages. Also participates in immunologic synapse formation. This Mus musculus (Mouse) protein is Moesin.